A 531-amino-acid chain; its full sequence is Acyl-CoA ligase azaF (531 aa).

188-199 (RLFSSGTTGLPK) contacts AMP. Residues 449–525 (EVEGVLRNHP…DAIPRNASGK (77 aa)) form an AMP-binding region.

This sequence belongs to the ATP-dependent AMP-binding enzyme family.

It functions in the pathway secondary metabolite biosynthesis. Acyl-CoA ligase; part of the gene cluster that mediates the biosynthesis of azaphilones, a class of fungal metabolites characterized by a highly oxygenated pyrano-quinone bicyclic core and exhibiting a broad range of bioactivities. In the first step, the non-reducing polyketide synthase azaA forms the hexaketide precursor from successive condensations of five malonyl-CoA units, presumably with a simple acetyl-CoA starter unit. The reactive polyketide chain then undergoes a PT-mediated C2-C7 cyclization to afford the aromatic ring and is eventually released as an aldehyde through the R-domain. The putative ketoreductase azaE is proposed to catalyze the reduction of the terminal ketone resulting in the early culture product FK17-P2a. The monooxygenase azaH was demonstrated to be the only enzyme required to convert FK17-P2a to azanigerone E. AzaH first hydroxylates the benzaldehyde intermediate FK17-P2a at C4, which triggers the formation of the pyran-ring to afford azanigerone E. In parallel, the 2,4-dimethylhexanoyl chain is synthesized by the HR-PKS azaB and is proposed to be transferred to the C4-hydroxyl of azanigerone E by the acyltransferase azaD directly from the ACP domain of azaB. Alternatively, the 2,4-dimethyl-hexanoyl chain may be offloaded from the HR-PKS as a carboxylic acid and converted to an acyl-CoA by azaF. The resulting acyl-CoA molecule could then be taken up as a substrate by AzaD to form azanigerone B. To yield the carboxylic acid substituent in azanigerone A, the hydroxypropyl side chain of azanigerone B would need to undergo a C-C oxidative cleavage catalyzed by cytochrome P450 AzaI. AzaI is proposed to act on a vicinal diol that leads to a C-C bond scission either through an alkoxyradical intermediate or a peroxy complex. In the biosynthesis of azanigerone A, azanigerone B first undergoes hydroxylation at C10, possibly catalyzed by one of the two FAD-dependent monooxygenases encoded in the cluster, azaG or azaL, resulting in the vicinal diol azanigerone C. Oxidative cleavage of azanigerone C by azaI would yield the corresponding aldehyde derivative of azanigerone A. Finally, the dehydrogenase azaJ is proposed to convert the aldehyde functional group into the carboxylic acid, completing the conversion from azanigerone B to azanigerone A. Alternatively, the oxidation of aldehyde to carboxylic acid may be catalyzed by the same P450 enzyme azaI via consecutive oxidation or by endogenous alcohol dehydrogenase. This chain is Acyl-CoA ligase azaF, found in Aspergillus niger (strain ATCC 1015 / CBS 113.46 / FGSC A1144 / LSHB Ac4 / NCTC 3858a / NRRL 328 / USDA 3528.7).